We begin with the raw amino-acid sequence, 347 residues long: GMP reductase (347 aa).

Residue 108–131 (DDFTKTRQILAMSSALRFICVDVA) coordinates NADP(+). K(+) contacts are provided by Gly-181 and Gly-183. The active-site Thioimidate intermediate is the Cys-186. 216–239 (IVGDGGCTCPGDVAKAFGGGADFV) contacts NADP(+).

It belongs to the IMPDH/GMPR family. GuaC type 1 subfamily. In terms of assembly, homotetramer.

It carries out the reaction IMP + NH4(+) + NADP(+) = GMP + NADPH + 2 H(+). Its function is as follows. Catalyzes the irreversible NADPH-dependent deamination of GMP to IMP. It functions in the conversion of nucleobase, nucleoside and nucleotide derivatives of G to A nucleotides, and in maintaining the intracellular balance of A and G nucleotides. This chain is GMP reductase, found in Aeromonas hydrophila subsp. hydrophila (strain ATCC 7966 / DSM 30187 / BCRC 13018 / CCUG 14551 / JCM 1027 / KCTC 2358 / NCIMB 9240 / NCTC 8049).